A 491-amino-acid polypeptide reads, in one-letter code: MNNQDQALIFEMSREGRIGYSLPELDVPETELESLLPGDYIRDEDAKLPEVSELDIMRHYTALSKRNHGVDSGFYPLGSCTMKYNPKLNEKIARIAGFSAIHPLQDEDTVQGALELLYDLSGHLEEITGMDEVTLQPAAGAHGEWTGLMMIRAYHEARGDFGRTKVIVPDSAHGTNPASATVAGFETITVKSNEHGLVDIEDLKRAVNEETAALMLTNPNTLGLFEENITEMAEIVHQAGGKLYYDGANLNAVLSKARPGDMGFDVVHLNLHKTFTGPHGGGGPGSGPVGVKKEFIPYLPKPVLTKKEGRLTFDYDRPQSIGRVKPYYGNFGINVRAYTYIRSMGPDGLKAVTENAVLNANYMMRRLAPYYDLPYDRHCKHEFVLSGRRQKKLGVRTLDIAKRLLDFGYHPPTVYFPLNVEESIMIEPTETESKETLDAFIDAMIQIAREAEESPEIVQEAPHTTVVKRMDETKAARKPVLKYERTLDGSR.

Position 273 is an N6-(pyridoxal phosphate)lysine (Lys-273).

Belongs to the GcvP family. C-terminal subunit subfamily. As to quaternary structure, the glycine cleavage system is composed of four proteins: P, T, L and H. In this organism, the P 'protein' is a heterodimer of two subunits. It depends on pyridoxal 5'-phosphate as a cofactor.

The enzyme catalyses N(6)-[(R)-lipoyl]-L-lysyl-[glycine-cleavage complex H protein] + glycine + H(+) = N(6)-[(R)-S(8)-aminomethyldihydrolipoyl]-L-lysyl-[glycine-cleavage complex H protein] + CO2. Functionally, the glycine cleavage system catalyzes the degradation of glycine. The P protein binds the alpha-amino group of glycine through its pyridoxal phosphate cofactor; CO(2) is released and the remaining methylamine moiety is then transferred to the lipoamide cofactor of the H protein. The chain is Probable glycine dehydrogenase (decarboxylating) subunit 2 from Bacillus velezensis (strain DSM 23117 / BGSC 10A6 / LMG 26770 / FZB42) (Bacillus amyloliquefaciens subsp. plantarum).